We begin with the raw amino-acid sequence, 86 residues long: Putative membrane protein insertion efficiency factor (86 aa).

This sequence belongs to the UPF0161 family.

It localises to the cell inner membrane. Functionally, could be involved in insertion of integral membrane proteins into the membrane. This Mannheimia succiniciproducens (strain KCTC 0769BP / MBEL55E) protein is Putative membrane protein insertion efficiency factor.